The chain runs to 327 residues: Probable cell division protein WhiA (327 aa).

The segment at residues 275–308 is a DNA-binding region (H-T-H motif); it reads SLEELGRLADPVMTKDAVAGRIRRLLSMADRKAK. Positions 307-327 are disordered; that stretch reads AKTEGIPDTESAVTPELLEEA.

This sequence belongs to the WhiA family.

Functionally, involved in cell division and chromosome segregation. The sequence is that of Probable cell division protein WhiA from Mycobacteroides abscessus (strain ATCC 19977 / DSM 44196 / CCUG 20993 / CIP 104536 / JCM 13569 / NCTC 13031 / TMC 1543 / L948) (Mycobacterium abscessus).